A 331-amino-acid polypeptide reads, in one-letter code: Glucokinase (331 aa).

14–19 (GDIGGT) is a binding site for ATP.

It belongs to the bacterial glucokinase family.

It localises to the cytoplasm. It catalyses the reaction D-glucose + ATP = D-glucose 6-phosphate + ADP + H(+). This is Glucokinase from Aromatoleum aromaticum (strain DSM 19018 / LMG 30748 / EbN1) (Azoarcus sp. (strain EbN1)).